The following is a 98-amino-acid chain: Keratin-associated protein 3-1 (98 aa).

A2 is subject to N-acetylalanine. 4 consecutive repeat copies span residues C3 to R7, C8 to R12, F47 to S51, and Y55 to D59. The segment at C3–D59 is 4 X 5 AA repeats of C-C-X(3).

It belongs to the KRTAP type 3 family. As to quaternary structure, interacts with wool keratins. In terms of tissue distribution, wool.

In the wool cortex, wool keratin intermediate filaments are embedded in an interfilamentous matrix, consisting of hair keratin-associated proteins (KRTAP), which are essential for the formation of a rigid and resistant wool shaft through their extensive disulfide bond cross-linking with abundant cysteine residues of wool keratins. The matrix proteins include the high-sulfur and high-glycine-tyrosine keratins. This is Keratin-associated protein 3-1 (KRTAP3-1) from Capra hircus (Goat).